Consider the following 438-residue polypeptide: Glutamate--tRNA ligase 2 (438 aa).

Positions P6 to N16 match the 'HIGH' region motif. A 'KMSKS' region motif is present at residues K231–R235. Position 234 (K234) interacts with ATP.

It belongs to the class-I aminoacyl-tRNA synthetase family. Glutamate--tRNA ligase type 1 subfamily. In terms of assembly, monomer.

The protein resides in the cytoplasm. It carries out the reaction tRNA(Glu) + L-glutamate + ATP = L-glutamyl-tRNA(Glu) + AMP + diphosphate. Functionally, catalyzes the attachment of glutamate to tRNA(Glu) in a two-step reaction: glutamate is first activated by ATP to form Glu-AMP and then transferred to the acceptor end of tRNA(Glu). The chain is Glutamate--tRNA ligase 2 from Wolinella succinogenes (strain ATCC 29543 / DSM 1740 / CCUG 13145 / JCM 31913 / LMG 7466 / NCTC 11488 / FDC 602W) (Vibrio succinogenes).